The chain runs to 251 residues: Pyrroloquinoline-quinone synthase (251 aa).

This sequence belongs to the PqqC family.

It catalyses the reaction 6-(2-amino-2-carboxyethyl)-7,8-dioxo-1,2,3,4,7,8-hexahydroquinoline-2,4-dicarboxylate + 3 O2 = pyrroloquinoline quinone + 2 H2O2 + 2 H2O + H(+). It functions in the pathway cofactor biosynthesis; pyrroloquinoline quinone biosynthesis. In terms of biological role, ring cyclization and eight-electron oxidation of 3a-(2-amino-2-carboxyethyl)-4,5-dioxo-4,5,6,7,8,9-hexahydroquinoline-7,9-dicarboxylic-acid to PQQ. This Pseudomonas syringae pv. syringae (strain B728a) protein is Pyrroloquinoline-quinone synthase.